A 66-amino-acid chain; its full sequence is Conotoxin mr5.2 (66 aa).

The N-terminal stretch at 1 to 19 (MRCVPVFVILLLLIASAPT) is a signal peptide. The propeptide occupies 20–48 (VDAQLKTKDDMPLASFHANVKRTLQILRD). A 4-carboxyglutamate mark is found at Glu-57 and Glu-61. Asparagine amide is present on Asn-65.

Post-translationally, contains 2 disulfide bonds that can be either 'C1-C3, C2-C4' or 'C1-C4, C2-C3', since these disulfide connectivities have been observed for conotoxins with cysteine framework V (for examples, see AC P0DQQ7 and AC P81755). Expressed by the venom duct.

The protein localises to the secreted. In Conus marmoreus (Marble cone), this protein is Conotoxin mr5.2.